The following is a 444-amino-acid chain: UDP-N-acetylglucosamine 1-carboxyvinyltransferase (444 aa).

Residue 22 to 23 participates in phosphoenolpyruvate binding; that stretch reads KN. Arg-94 is a binding site for UDP-N-acetyl-alpha-D-glucosamine. The Proton donor role is filled by Asp-119. Positions 309 and 331 each coordinate UDP-N-acetyl-alpha-D-glucosamine.

This sequence belongs to the EPSP synthase family. MurA subfamily.

Its subcellular location is the cytoplasm. It catalyses the reaction phosphoenolpyruvate + UDP-N-acetyl-alpha-D-glucosamine = UDP-N-acetyl-3-O-(1-carboxyvinyl)-alpha-D-glucosamine + phosphate. It participates in cell wall biogenesis; peptidoglycan biosynthesis. Its function is as follows. Cell wall formation. Adds enolpyruvyl to UDP-N-acetylglucosamine. The polypeptide is UDP-N-acetylglucosamine 1-carboxyvinyltransferase (Chlamydia trachomatis serovar D (strain ATCC VR-885 / DSM 19411 / UW-3/Cx)).